The following is an 82-amino-acid chain: Small ribosomal subunit protein uS17 (82 aa).

It belongs to the universal ribosomal protein uS17 family. As to quaternary structure, part of the 30S ribosomal subunit.

In terms of biological role, one of the primary rRNA binding proteins, it binds specifically to the 5'-end of 16S ribosomal RNA. The polypeptide is Small ribosomal subunit protein uS17 (Azorhizobium caulinodans (strain ATCC 43989 / DSM 5975 / JCM 20966 / LMG 6465 / NBRC 14845 / NCIMB 13405 / ORS 571)).